A 215-amino-acid chain; its full sequence is Deoxyadenosine kinase (215 aa).

9-17 (GPIGAGKSS) lines the ATP pocket. The substrate site is built by E33, Y45, and N56. D79 (proton acceptor) is an active-site residue. The substrate site is built by R80, D85, and E150.

This sequence belongs to the DCK/DGK family. Heterodimer of a deoxyadenosine (DAK) and a deoxyguanosine kinase (DGK).

It carries out the reaction 2'-deoxyadenosine + ATP = dAMP + ADP + H(+). In terms of biological role, DGK/DAK plays an essential role in generating the deoxyribonucleotide precursors, dGTP and dATP, for DNA metabolism. In Lactobacillus acidophilus (strain ATCC 700396 / NCK56 / N2 / NCFM), this protein is Deoxyadenosine kinase.